Consider the following 495-residue polypeptide: Histidine--tRNA ligase (495 aa).

This sequence belongs to the class-II aminoacyl-tRNA synthetase family. In terms of assembly, homodimer.

The protein localises to the cytoplasm. The catalysed reaction is tRNA(His) + L-histidine + ATP = L-histidyl-tRNA(His) + AMP + diphosphate + H(+). The protein is Histidine--tRNA ligase of Bartonella henselae (strain ATCC 49882 / DSM 28221 / CCUG 30454 / Houston 1) (Rochalimaea henselae).